Consider the following 1009-residue polypeptide: MKNIFRRSVQIFHKDKKEGDKQDYTGSSGSSGNSGTDRSPTSSLSKKDKKHSKHHQNESYSGDNSPTLSRNHHDEIGHLQYTANHHIATSHHSHSHNHNHNHNHQLTQPIQQQQQTQHVNLASNNYYIRHIYTNNQYDETTQIVMNNGIPFIYNPNARKIFGVPLTQVPCRAGSNVPIIIEKLIDHIERTSLNSEGLFRIPGVDLTINQYIKLFDNGEDVDVSPIEPYTAAGLLKRFFRDLPVFVPQSINKRVVSLFIDEEGKKKPVDMEILSNLRVLVHQLPTVHFEVMQELTNLLGKLMSRSDQNKMTISNIAICLVPTLNCVPAIVTYSIQMHDFFYNEVFPQHHLYYMRPYEEKLVESAPTQPINIMTTSGGEKRYSSRPASITISGLLPSNGQNNSPSSSTITSTTITSPHDSTAPITFTVTTTFSPEQQQQMLQQQQQQQQQQEKQSSSSLSQSQQSIQPISDTNSTKSDRRTFRVDPNLDLTQYIEDTQYNVNRNYLYNGGPSGTTGTTPNGGSLSIGGGNGGNGGSSLSVGSGGGNGGSSLSVGSNTSVGVGGGGGGNNTTDQSKIYRRSVAYTNNEDTKAAIQQIKEKIDRYSKEKKTREEKEREKLLRYSIDLERYKDRTINNKQEKRASRDINKEIEREIEKKRLSPRERLNLFGLSSSSSSVNSTLTRSTANIISTIDGSGGSNRNSKNYGNGSSSSSNRRYSNTINQQLQMQLQQLQIQQQQYQQTQQSQIPLQYQQQQQQQQQQTTTTTTTSSGSNRFSSNRYKPVDLTQSSSNFRYSREIYDDDYYSNNNLMMFGNEQPNQTPISVSSSSAFTRQRSQSCFEPENLVLLQQQYQQYQQQQQQQQQIPFQANPQYSNAVIEQKLDQIRDTINNLHRDNRVSRDYTHYLREVEDLRSSLQKETVVSNEFIKNIELEDKLRREEEKNQRLIEEIHLLETYFILKEKSKAKRLSTTKDLLTRSRSPTLPSSINMSTSSLGSSSSSAYNNNNNNNNVPK.

Disordered stretches follow at residues 1–72 (MKNI…SRNH) and 89–117 (TSHHSHSHNHNHNHNHQLTQPIQQQQQTQ). A compositionally biased stretch (basic and acidic residues) spans 12–23 (FHKDKKEGDKQD). Over residues 26–35 (GSSGSSGNSG) the composition is skewed to low complexity. Residues 58–69 (ESYSGDNSPTLS) show a composition bias toward polar residues. Positions 89–103 (TSHHSHSHNHNHNHN) are enriched in basic residues. A compositionally biased stretch (low complexity) spans 104-117 (HQLTQPIQQQQQTQ). The 189-residue stretch at 163 to 351 (VPLTQVPCRA…EVFPQHHLYY (189 aa)) folds into the Rho-GAP domain. 3 disordered regions span residues 388–420 (TISGLLPSNGQNNSPSSSTITSTTITSPHDSTA), 432–482 (PEQQ…TFRV), and 508–571 (GPSG…TTDQ). Composition is skewed to low complexity over residues 394 to 415 (PSNGQNNSPSSSTITSTTITSP), 432 to 468 (PEQQQQMLQQQQQQQQQQEKQSSSSLSQSQQSIQPIS), and 512 to 521 (TTGTTPNGGS). The span at 522–546 (LSIGGGNGGNGGSSLSVGSGGGNGG) shows a compositional bias: gly residues. The segment covering 547–557 (SSLSVGSNTSV) has biased composition (low complexity). Positions 580–656 (AYTNNEDTKA…IEREIEKKRL (77 aa)) form a coiled coil. The interval 686-713 (ISTIDGSGGSNRNSKNYGNGSSSSSNRR) is disordered. Low complexity predominate over residues 695–713 (SNRNSKNYGNGSSSSSNRR). Residues 715–743 (SNTINQQLQMQLQQLQIQQQQYQQTQQSQ) adopt a coiled-coil conformation. Positions 759–781 (TTTTTTTSSGSNRFSSNRYKPVD) are disordered. A compositionally biased stretch (polar residues) spans 766–781 (SSGSNRFSSNRYKPVD). Residues 839 to 952 (ENLVLLQQQY…IEEIHLLETY (114 aa)) adopt a coiled-coil conformation. The interval 965 to 1009 (STTKDLLTRSRSPTLPSSINMSTSSLGSSSSSAYNNNNNNNNVPK) is disordered. Over residues 967–980 (TKDLLTRSRSPTLP) the composition is skewed to polar residues. The span at 981–1009 (SSINMSTSSLGSSSSSAYNNNNNNNNVPK) shows a compositional bias: low complexity.

Its subcellular location is the cytoplasm. Its function is as follows. Rho GTPase-activating protein involved in the signal transduction pathway. This chain is Rho GTPase-activating protein gacT (gacT), found in Dictyostelium discoideum (Social amoeba).